Reading from the N-terminus, the 309-residue chain is S-methyl-5'-thioadenosine phosphorylase (309 aa).

Phosphate contacts are provided by residues threonine 19, 64-65 (RH), and 97-98 (SA). Methionine 201 contributes to the substrate binding site. Residue serine 202 coordinates phosphate. A substrate-binding site is contributed by 225–227 (DYD).

Belongs to the PNP/MTAP phosphorylase family. MTAP subfamily. Homotrimer.

The protein resides in the cytoplasm. It localises to the nucleus. The catalysed reaction is S-methyl-5'-thioadenosine + phosphate = 5-(methylsulfanyl)-alpha-D-ribose 1-phosphate + adenine. It functions in the pathway amino-acid biosynthesis; L-methionine biosynthesis via salvage pathway; S-methyl-5-thio-alpha-D-ribose 1-phosphate from S-methyl-5'-thioadenosine (phosphorylase route): step 1/1. Functionally, catalyzes the reversible phosphorylation of S-methyl-5'-thioadenosine (MTA) to adenine and 5-methylthioribose-1-phosphate. Involved in the breakdown of MTA, a major by-product of polyamine biosynthesis. Responsible for the first step in the methionine salvage pathway after MTA has been generated from S-adenosylmethionine. Has broad substrate specificity with 6-aminopurine nucleosides as preferred substrates. In Tuber melanosporum (strain Mel28) (Perigord black truffle), this protein is S-methyl-5'-thioadenosine phosphorylase.